The chain runs to 409 residues: S-adenosylmethionine synthase (409 aa).

An ATP-binding site is contributed by H15. D17 contacts Mg(2+). E43 is a K(+) binding site. L-methionine contacts are provided by E56 and Q100. Residues 100–110 form a flexible loop region; the sequence is QSSDIAQGVNE. Residues 171-173, 248-249, D257, 263-264, A280, and K284 each bind ATP; these read DGK, KF, and RK. D257 is a binding site for L-methionine. Position 288 (K288) interacts with L-methionine.

The protein belongs to the AdoMet synthase family. Homotetramer; dimer of dimers. Mg(2+) is required as a cofactor. Requires K(+) as cofactor.

The protein localises to the cytoplasm. The enzyme catalyses L-methionine + ATP + H2O = S-adenosyl-L-methionine + phosphate + diphosphate. It functions in the pathway amino-acid biosynthesis; S-adenosyl-L-methionine biosynthesis; S-adenosyl-L-methionine from L-methionine: step 1/1. In terms of biological role, catalyzes the formation of S-adenosylmethionine (AdoMet) from methionine and ATP. The overall synthetic reaction is composed of two sequential steps, AdoMet formation and the subsequent tripolyphosphate hydrolysis which occurs prior to release of AdoMet from the enzyme. In Prochlorococcus marinus (strain NATL2A), this protein is S-adenosylmethionine synthase.